Here is a 197-residue protein sequence, read N- to C-terminus: Peptide deformylase (197 aa).

Fe cation-binding residues include Cys-106 and His-148. Glu-149 is an active-site residue. His-152 is a Fe cation binding site.

This sequence belongs to the polypeptide deformylase family. Fe(2+) is required as a cofactor.

The catalysed reaction is N-terminal N-formyl-L-methionyl-[peptide] + H2O = N-terminal L-methionyl-[peptide] + formate. Functionally, removes the formyl group from the N-terminal Met of newly synthesized proteins. Requires at least a dipeptide for an efficient rate of reaction. N-terminal L-methionine is a prerequisite for activity but the enzyme has broad specificity at other positions. This is Peptide deformylase from Mycobacterium bovis (strain ATCC BAA-935 / AF2122/97).